The primary structure comprises 78 residues: 4-methyl-3-hydroxyanthranilic acid carrier protein (78 aa).

Ser-33 is modified (O-(pantetheine 4'-phosphoryl)serine).

It belongs to the acyl carrier protein (ACP) family. 4'-phosphopantetheine is transferred from CoA to a specific serine of the apo-form of this carrier protein.

Its pathway is antibiotic biosynthesis. Its function is as follows. Involved in the biosynthesis of actinomycin. Acts as a carrier in the transfer and thioesterification of 4-methyl-3-hydroxyanthranilic acid (4-MHA). This Streptomyces anulatus (Streptomyces chrysomallus) protein is 4-methyl-3-hydroxyanthranilic acid carrier protein.